Here is a 69-residue protein sequence, read N- to C-terminus: Protein transport protein Sec61 subunit gamma-1 (69 aa).

Methionine 1 bears the N-acetylmethionine mark. At 1 to 32 (MDAIDSVVDPLRDFAKDSIRLVKRCHKPDRKE) the chain is on the cytoplasmic side. Residues 33–61 (FTKVAVRTAIGFVVMGFVGFFVKLIFIPI) traverse the membrane as a helical segment. Residues 62-69 (NNIIVGAT) lie on the Extracellular side of the membrane.

Belongs to the SecE/SEC61-gamma family. In terms of assembly, heterotrimeric complex composed of SEC61-alpha, SEC61-beta and SEC61-gamma.

It localises to the endoplasmic reticulum membrane. Functionally, necessary for protein translocation in the endoplasmic reticulum. This is Protein transport protein Sec61 subunit gamma-1 (SEC61G1) from Arabidopsis thaliana (Mouse-ear cress).